We begin with the raw amino-acid sequence, 142 residues long: ATP synthase epsilon chain (142 aa).

The protein belongs to the ATPase epsilon chain family. In terms of assembly, F-type ATPases have 2 components, CF(1) - the catalytic core - and CF(0) - the membrane proton channel. CF(1) has five subunits: alpha(3), beta(3), gamma(1), delta(1), epsilon(1). CF(0) has three main subunits: a, b and c.

The protein resides in the cell inner membrane. Produces ATP from ADP in the presence of a proton gradient across the membrane. The chain is ATP synthase epsilon chain from Shewanella baltica (strain OS155 / ATCC BAA-1091).